Reading from the N-terminus, the 513-residue chain is ATP synthase subunit alpha (513 aa).

169-176 (GDRQTGKT) serves as a coordination point for ATP.

It belongs to the ATPase alpha/beta chains family. F-type ATPases have 2 components, CF(1) - the catalytic core - and CF(0) - the membrane proton channel. CF(1) has five subunits: alpha(3), beta(3), gamma(1), delta(1), epsilon(1). CF(0) has three main subunits: a(1), b(2) and c(9-12). The alpha and beta chains form an alternating ring which encloses part of the gamma chain. CF(1) is attached to CF(0) by a central stalk formed by the gamma and epsilon chains, while a peripheral stalk is formed by the delta and b chains.

It localises to the cell inner membrane. It catalyses the reaction ATP + H2O + 4 H(+)(in) = ADP + phosphate + 5 H(+)(out). In terms of biological role, produces ATP from ADP in the presence of a proton gradient across the membrane. The alpha chain is a regulatory subunit. This chain is ATP synthase subunit alpha, found in Bordetella pertussis (strain Tohama I / ATCC BAA-589 / NCTC 13251).